The chain runs to 334 residues: Galactinol synthase 3 (334 aa).

Lys97 is an active-site residue. Positions 113, 115, and 251 each coordinate Mn(2+).

The protein belongs to the glycosyltransferase 8 family. Galactosyltransferase subfamily. It depends on a divalent metal cation as a cofactor.

The protein resides in the cytoplasm. It carries out the reaction myo-inositol + UDP-alpha-D-galactose = alpha-D-galactosyl-(1-&gt;3)-1D-myo-inositol + UDP + H(+). In terms of biological role, galactinol synthase involved in the biosynthesis of raffinose family oligosaccharides (RFOs) that function as osmoprotectants. May promote plant stress tolerance. In Arabidopsis thaliana (Mouse-ear cress), this protein is Galactinol synthase 3 (GOLS3).